We begin with the raw amino-acid sequence, 748 residues long: Catalase-peroxidase (748 aa).

A cross-link (tryptophyl-tyrosyl-methioninium (Trp-Tyr) (with M-255)) is located at residues 96–229; that stretch reads WHSAGTYRVA…LAAAHMGLIY (134 aa). The active-site Proton acceptor is histidine 97. The segment at residues 229–255 is a cross-link (tryptophyl-tyrosyl-methioninium (Tyr-Met) (with W-96)); sequence YVNPEGPDGNPDPIAAAKDIRTTFGRM. Histidine 270 contacts heme b.

This sequence belongs to the peroxidase family. Peroxidase/catalase subfamily. In terms of assembly, homodimer or homotetramer. Heme b serves as cofactor. Formation of the three residue Trp-Tyr-Met cross-link is important for the catalase, but not the peroxidase activity of the enzyme.

Its subcellular location is the cytoplasm. The enzyme catalyses H2O2 + AH2 = A + 2 H2O. The catalysed reaction is 2 H2O2 = O2 + 2 H2O. Functionally, bifunctional enzyme with both catalase and broad-spectrum peroxidase activity. Plays a crucial role in oxidative stress response during infection. Acts as an antigen and elicits antibody response in P.marneffei-infected AIDS patients, healthy people working in mycological laboratory, and healthy people in an endemic area. This is Catalase-peroxidase from Talaromyces marneffei (Penicillium marneffei).